Here is a 560-residue protein sequence, read N- to C-terminus: Nucleoprotein (560 aa).

The tract at residues 54-236 is binding site for the cap structure m7GTP; it reads LRKAKRSDAD…ITRDESAVNI (183 aa). The span at 323 to 332 shows a compositional bias: polar residues; the sequence is GRSWDNTSVD. The interval 323–349 is disordered; it reads GRSWDNTSVDLNPKPDPGPRAPEKNGQ. Mn(2+) contacts are provided by aspartate 380 and glutamate 382. Residues glutamate 390, cysteine 497, histidine 500, and cysteine 521 each coordinate Zn(2+). A Mn(2+)-binding site is contributed by aspartate 525.

It belongs to the arenaviridae nucleocapsid protein family. As to quaternary structure, homomultimerizes to form the nucleocapsid. Binds to viral genomic RNA. Interacts with glycoprotein G2. Interacts with protein Z; this interaction probably directs the encapsidated genome to budding sites. Interacts with protein L; this interaction does not interfere with Z-L interaction. Interacts with host IKBKE (via Protein kinase domain); the interaction inhibits IKBKE kinase activity.

The protein resides in the virion. The protein localises to the host cytoplasm. In terms of biological role, encapsidates the genome, protecting it from nucleases. The encapsidated genomic RNA is termed the nucleocapsid (NC). Serves as template for viral transcription and replication. The increased presence of protein N in host cell does not seem to trigger the switch from transcription to replication as observed in other negative strain RNA viruses. Through the interaction with host IKBKE, strongly inhibits the phosphorylation and nuclear translocation of host IRF3, a protein involved in interferon activation pathway, leading to the inhibition of interferon-beta and IRF3-dependent promoters activation. Also encodes a functional 3'-5' exoribonuclease that degrades preferentially dsRNA substrates and thereby participates in the suppression of interferon induction. The sequence is that of Nucleoprotein from Cupixi mammarenavirus (isolate Rat/Brasil/BeAn 119303/1970) (CPXV).